A 22-amino-acid chain; its full sequence is Myofibril-bound serine protease (22 aa).

This sequence belongs to the peptidase S1 family. Detected in muscle (at protein level).

It localises to the cytoplasm. Its activity is regulated as follows. Inhibited by the serine protease inhibitors, antipain, aprotinin, DFP, leupeptin, STI and TLCK, and by the cysteine proteinase inhibitors DTNB and to a lesser extent E-64. Not inhibited by the metalloproteinase inhibitor EDTA. Functionally, serine protease that selectively cleaves Arg-|-Xaa bonds. In Cyprinus carpio (Common carp), this protein is Myofibril-bound serine protease.